Consider the following 388-residue polypeptide: Pepsin A-5 (388 aa).

Residues 1 to 15 (MKWLLLLGLVALSEC) form the signal peptide. The propeptide at 16–62 (IMYKVPLIRKKSLRRTLSERGLLKDFLKKHNLNPARKYFPQWEAPTL) is activation peptide. Residues 76-385 (YFGTIGIGTP…DRANNQVGLA (310 aa)) form the Peptidase A1 domain. Asp-94 is a catalytic residue. A disulfide bridge links Cys-107 with Cys-112. Ser-130 carries the post-translational modification Phosphoserine. Residues Cys-268 and Cys-272 are joined by a disulfide bond. Residue Asp-277 is part of the active site. A disulfide bond links Cys-311 and Cys-344.

It belongs to the peptidase A1 family.

The protein resides in the secreted. The enzyme catalyses Preferential cleavage: hydrophobic, preferably aromatic, residues in P1 and P1' positions. Cleaves 1-Phe-|-Val-2, 4-Gln-|-His-5, 13-Glu-|-Ala-14, 14-Ala-|-Leu-15, 15-Leu-|-Tyr-16, 16-Tyr-|-Leu-17, 23-Gly-|-Phe-24, 24-Phe-|-Phe-25 and 25-Phe-|-Tyr-26 bonds in the B chain of insulin.. In terms of biological role, shows particularly broad specificity; although bonds involving phenylalanine and leucine are preferred, many others are also cleaved to some extent. This is Pepsin A-5 (PGA5) from Homo sapiens (Human).